Reading from the N-terminus, the 231-residue chain is Large ribosomal subunit protein uL1 (231 aa).

The protein belongs to the universal ribosomal protein uL1 family. Part of the 50S ribosomal subunit.

Functionally, binds directly to 23S rRNA. The L1 stalk is quite mobile in the ribosome, and is involved in E site tRNA release. Protein L1 is also a translational repressor protein, it controls the translation of the L11 operon by binding to its mRNA. This is Large ribosomal subunit protein uL1 from Acinetobacter baumannii (strain AB0057).